The chain runs to 158 residues: Small ribosomal subunit protein uS7 (158 aa).

The protein belongs to the universal ribosomal protein uS7 family. As to quaternary structure, part of the 30S ribosomal subunit. Contacts proteins S9 and S11.

One of the primary rRNA binding proteins, it binds directly to 16S rRNA where it nucleates assembly of the head domain of the 30S subunit. Is located at the subunit interface close to the decoding center, probably blocks exit of the E-site tRNA. In Leptospira biflexa, this protein is Small ribosomal subunit protein uS7.